A 210-amino-acid polypeptide reads, in one-letter code: Small ribosomal subunit protein uS3 (210 aa).

A KH type-2 domain is found at 38 to 106 (LRSFLKKRLY…EVYLNIQEVR (69 aa)).

This sequence belongs to the universal ribosomal protein uS3 family. In terms of assembly, part of the 30S ribosomal subunit. Forms a tight complex with proteins S10 and S14.

Functionally, binds the lower part of the 30S subunit head. Binds mRNA in the 70S ribosome, positioning it for translation. The sequence is that of Small ribosomal subunit protein uS3 from Geotalea uraniireducens (strain Rf4) (Geobacter uraniireducens).